A 268-amino-acid chain; its full sequence is 4-hydroxy-tetrahydrodipicolinate reductase (268 aa).

NAD(+) contacts are provided by residues 10 to 15 (GASGRM), Asp36, 99 to 101 (GTT), and 123 to 126 (APNM). Residue His156 is the Proton donor/acceptor of the active site. His157 is a binding site for (S)-2,3,4,5-tetrahydrodipicolinate. Catalysis depends on Lys160, which acts as the Proton donor. A (S)-2,3,4,5-tetrahydrodipicolinate-binding site is contributed by 166–167 (GT).

It belongs to the DapB family.

The protein localises to the cytoplasm. The enzyme catalyses (S)-2,3,4,5-tetrahydrodipicolinate + NAD(+) + H2O = (2S,4S)-4-hydroxy-2,3,4,5-tetrahydrodipicolinate + NADH + H(+). It catalyses the reaction (S)-2,3,4,5-tetrahydrodipicolinate + NADP(+) + H2O = (2S,4S)-4-hydroxy-2,3,4,5-tetrahydrodipicolinate + NADPH + H(+). Its pathway is amino-acid biosynthesis; L-lysine biosynthesis via DAP pathway; (S)-tetrahydrodipicolinate from L-aspartate: step 4/4. Its function is as follows. Catalyzes the conversion of 4-hydroxy-tetrahydrodipicolinate (HTPA) to tetrahydrodipicolinate. This Herminiimonas arsenicoxydans protein is 4-hydroxy-tetrahydrodipicolinate reductase.